The primary structure comprises 455 residues: Phosphoglucosamine mutase (455 aa).

Ser-104 functions as the Phosphoserine intermediate in the catalytic mechanism. Residues Ser-104, Asp-243, Asp-245, and Asp-247 each contribute to the Mg(2+) site. Ser-104 bears the Phosphoserine mark.

The protein belongs to the phosphohexose mutase family. The cofactor is Mg(2+). In terms of processing, activated by phosphorylation.

The catalysed reaction is alpha-D-glucosamine 1-phosphate = D-glucosamine 6-phosphate. Its function is as follows. Catalyzes the conversion of glucosamine-6-phosphate to glucosamine-1-phosphate. The polypeptide is Phosphoglucosamine mutase (Synechococcus sp. (strain CC9311)).